The sequence spans 447 residues: Signal recognition particle 54 kDa protein (447 aa).

Residues 108–115, 188–192, and 246–249 each bind GTP; these read GLYGMGKT, DTAGR, and TKLD.

This sequence belongs to the GTP-binding SRP family. SRP54 subfamily. Part of the signal recognition particle protein translocation system, which is composed of SRP and FtsY. Archaeal SRP consists of a 7S RNA molecule of 300 nucleotides and two protein subunits: SRP54 and SRP19.

Its subcellular location is the cytoplasm. The enzyme catalyses GTP + H2O = GDP + phosphate + H(+). Functionally, involved in targeting and insertion of nascent membrane proteins into the cytoplasmic membrane. Binds to the hydrophobic signal sequence of the ribosome-nascent chain (RNC) as it emerges from the ribosomes. The SRP-RNC complex is then targeted to the cytoplasmic membrane where it interacts with the SRP receptor FtsY. This is Signal recognition particle 54 kDa protein from Methanopyrus kandleri (strain AV19 / DSM 6324 / JCM 9639 / NBRC 100938).